The primary structure comprises 74 residues: MSKEDAIEVEGVVTESLPNAMFRVDLDNGFNVLAHISGKIRRNYIKILPGDRVKVELSPYDLNKGRITYRLKKK.

In terms of domain architecture, S1-like spans 1–72; it reads MSKEDAIEVE…NKGRITYRLK (72 aa).

It belongs to the IF-1 family. As to quaternary structure, component of the 30S ribosomal translation pre-initiation complex which assembles on the 30S ribosome in the order IF-2 and IF-3, IF-1 and N-formylmethionyl-tRNA(fMet); mRNA recruitment can occur at any time during PIC assembly.

The protein resides in the cytoplasm. One of the essential components for the initiation of protein synthesis. Stabilizes the binding of IF-2 and IF-3 on the 30S subunit to which N-formylmethionyl-tRNA(fMet) subsequently binds. Helps modulate mRNA selection, yielding the 30S pre-initiation complex (PIC). Upon addition of the 50S ribosomal subunit IF-1, IF-2 and IF-3 are released leaving the mature 70S translation initiation complex. This Synechococcus sp. (strain JA-3-3Ab) (Cyanobacteria bacterium Yellowstone A-Prime) protein is Translation initiation factor IF-1.